Here is a 262-residue protein sequence, read N- to C-terminus: Acyl-[acyl-carrier-protein]--UDP-N-acetylglucosamine O-acyltransferase (262 aa).

It belongs to the transferase hexapeptide repeat family. LpxA subfamily. As to quaternary structure, homotrimer.

It localises to the cytoplasm. The catalysed reaction is a (3R)-hydroxyacyl-[ACP] + UDP-N-acetyl-alpha-D-glucosamine = a UDP-3-O-[(3R)-3-hydroxyacyl]-N-acetyl-alpha-D-glucosamine + holo-[ACP]. The protein operates within glycolipid biosynthesis; lipid IV(A) biosynthesis; lipid IV(A) from (3R)-3-hydroxytetradecanoyl-[acyl-carrier-protein] and UDP-N-acetyl-alpha-D-glucosamine: step 1/6. Involved in the biosynthesis of lipid A, a phosphorylated glycolipid that anchors the lipopolysaccharide to the outer membrane of the cell. In Wigglesworthia glossinidia brevipalpis, this protein is Acyl-[acyl-carrier-protein]--UDP-N-acetylglucosamine O-acyltransferase.